A 224-amino-acid chain; its full sequence is dTTP/UTP pyrophosphatase (224 aa).

The active-site Proton acceptor is the D77.

This sequence belongs to the Maf family. YhdE subfamily. A divalent metal cation serves as cofactor.

It is found in the cytoplasm. It catalyses the reaction dTTP + H2O = dTMP + diphosphate + H(+). The enzyme catalyses UTP + H2O = UMP + diphosphate + H(+). Functionally, nucleoside triphosphate pyrophosphatase that hydrolyzes dTTP and UTP. May have a dual role in cell division arrest and in preventing the incorporation of modified nucleotides into cellular nucleic acids. This Dehalococcoides mccartyi (strain ATCC BAA-2266 / KCTC 15142 / 195) (Dehalococcoides ethenogenes (strain 195)) protein is dTTP/UTP pyrophosphatase.